We begin with the raw amino-acid sequence, 264 residues long: Thymidylate synthase (264 aa).

Arginine 21 contributes to the dUMP binding site. Position 51 (histidine 51) interacts with (6R)-5,10-methylene-5,6,7,8-tetrahydrofolate. 126–127 contacts dUMP; the sequence is RR. Catalysis depends on cysteine 146, which acts as the Nucleophile. Residues 166–169, asparagine 177, and 207–209 contribute to the dUMP site; these read RSAD and HLY. Aspartate 169 contacts (6R)-5,10-methylene-5,6,7,8-tetrahydrofolate. Serine 263 is a (6R)-5,10-methylene-5,6,7,8-tetrahydrofolate binding site.

The protein belongs to the thymidylate synthase family. Bacterial-type ThyA subfamily. In terms of assembly, homodimer.

It is found in the cytoplasm. It carries out the reaction dUMP + (6R)-5,10-methylene-5,6,7,8-tetrahydrofolate = 7,8-dihydrofolate + dTMP. It functions in the pathway pyrimidine metabolism; dTTP biosynthesis. Catalyzes the reductive methylation of 2'-deoxyuridine-5'-monophosphate (dUMP) to 2'-deoxythymidine-5'-monophosphate (dTMP) while utilizing 5,10-methylenetetrahydrofolate (mTHF) as the methyl donor and reductant in the reaction, yielding dihydrofolate (DHF) as a by-product. This enzymatic reaction provides an intracellular de novo source of dTMP, an essential precursor for DNA biosynthesis. In Nitrosococcus oceani (strain ATCC 19707 / BCRC 17464 / JCM 30415 / NCIMB 11848 / C-107), this protein is Thymidylate synthase.